The primary structure comprises 114 residues: Large ribosomal subunit protein bL20 (114 aa).

This sequence belongs to the bacterial ribosomal protein bL20 family.

Its function is as follows. Binds directly to 23S ribosomal RNA and is necessary for the in vitro assembly process of the 50S ribosomal subunit. It is not involved in the protein synthesizing functions of that subunit. The sequence is that of Large ribosomal subunit protein bL20 from Amoebophilus asiaticus (strain 5a2).